The sequence spans 408 residues: Tyrosine--tRNA ligase (408 aa).

The short motif at 50-59 (PTGKDLTLGH) is the 'HIGH' region element. A 'KMSKS' region motif is present at residues 234-238 (KMSKS). K237 is a binding site for ATP. Positions 346-407 (MQAARVLFTA…GKRKYGRVVL (62 aa)) constitute an S4 RNA-binding domain.

The protein belongs to the class-I aminoacyl-tRNA synthetase family. TyrS type 2 subfamily. Homodimer.

Its subcellular location is the cytoplasm. It catalyses the reaction tRNA(Tyr) + L-tyrosine + ATP = L-tyrosyl-tRNA(Tyr) + AMP + diphosphate + H(+). Its function is as follows. Catalyzes the attachment of tyrosine to tRNA(Tyr) in a two-step reaction: tyrosine is first activated by ATP to form Tyr-AMP and then transferred to the acceptor end of tRNA(Tyr). This Symbiobacterium thermophilum (strain DSM 24528 / JCM 14929 / IAM 14863 / T) protein is Tyrosine--tRNA ligase.